The primary structure comprises 65 residues: Large ribosomal subunit protein bL35c (65 aa).

It belongs to the bacterial ribosomal protein bL35 family.

The protein resides in the plastid. Its subcellular location is the cyanelle. The sequence is that of Large ribosomal subunit protein bL35c (rpl35) from Cyanophora paradoxa.